The chain runs to 210 residues: Thymidylate kinase (210 aa).

10 to 17 (GPDGAGKT) contacts ATP.

This sequence belongs to the thymidylate kinase family.

The enzyme catalyses dTMP + ATP = dTDP + ADP. Its function is as follows. Phosphorylation of dTMP to form dTDP in both de novo and salvage pathways of dTTP synthesis. This Geobacillus sp. (strain WCH70) protein is Thymidylate kinase.